The chain runs to 837 residues: Espin (837 aa).

ANK repeat units lie at residues 1–31 (MALE…GPSL), 35–66 (LDAL…AVSR), 69–99 (NGAT…RVQE), 103–132 (SGAT…ANSA), 137–167 (TGAL…GVNA), 171–201 (NGAT…DPHL), 205–235 (DGMT…SFEQ), 238–267 (DGAT…EISQ), and 270–299 (WGGT…GLDV). A phosphoserine mark is found at Ser-337 and Ser-341. The span at 339 to 348 (DPSMDLEAKQ) shows a compositional bias: basic and acidic residues. Disordered regions lie at residues 339–459 (DPSM…VGLH), 477–712 (DSLK…PATL), 745–767 (KLQQ…EARL), and 785–816 (EREQ…TLGY). The span at 351–364 (SGMSSPNTTMSVQP) shows a compositional bias: polar residues. Residues 376 to 395 (LSNYDSCSSSHSSSKGQRST) are compositionally biased toward low complexity. Phosphoserine occurs at positions 400 and 401. Over residues 423-455 (SLPPPPPPSFPPPPPPGTQLPPPPPGYPAPNPP) the composition is skewed to pro residues. Phosphoserine occurs at positions 497, 504, and 531. Residues 581–604 (LPPPPPPPPLPEALSSPPPAPPLP) are compositionally biased toward pro residues. Positions 617–626 (SSSSTGSTKS) are enriched in low complexity. Polar residues-rich tracts occupy residues 627–636 (FNMMSPTGDN) and 651–662 (PTPQSKGLTTVF). Ser-631 carries the phosphoserine modification. Residues 635 to 652 (DNSELLAEIKAGKSLKPT) enclose the WH2 domain. The span at 663–673 (SGSGQPASQPE) shows a compositional bias: low complexity. Ser-670, Ser-674, and Ser-680 each carry phosphoserine. Residues 738 to 814 (KRQVMVRKLQ…KEQSEKLRTL (77 aa)) are a coiled coil.

Monomer. Interacts with PFN2. Binds F-actin in a Ca(2+)-resistant fashion. Interacts (via N-terminal) with BAIAP2 (via SH3-domain). Interacts with MYO3A (via C-terminus). Interacts with MYO3B (via C-terminus). Expressed at high concentration in the microvillar parallel actin bundle (PAB) of hair cells stereocilia in the cochlea and vestibular system. Detected also at high levels of a number of other sensory cell types, including taste receptor cells, solitary chemoreceptor cells, vomeronasal sensory neurons and Merkel cells. Isoform 1 is detected in testis. Isoforms 2 is detected in small intestine and kidney (at protein level). Isoforms 3, 4, 6 and 8 are expressed in Purkinje cells dendritic spines.

Its subcellular location is the cytoplasm. It localises to the cytoskeleton. The protein resides in the cell projection. It is found in the stereocilium. The protein localises to the microvillus. Its subcellular location is the cell junction. It localises to the dendritic spine. In terms of biological role, multifunctional actin-bundling protein. Plays a major role in regulating the organization, dimension, dynamics and signaling capacities of the actin filament-rich microvilli in the mechanosensory and chemosensory cells. Required for the assembly and stabilization of the stereociliary parallel actin bundles. Plays a crucial role in the formation and maintenance of inner ear hair cell stereocilia. Involved in the elongation of actin in stereocilia. In extrastriolar hair cells, required for targeting MYO3B to stereocilia tips, and for regulation of stereocilia diameter and staircase formation. The protein is Espin (Espn) of Rattus norvegicus (Rat).